Reading from the N-terminus, the 165-residue chain is Ribosome maturation factor RimM (165 aa).

One can recognise a PRC barrel domain in the interval 94 to 165; the sequence is EDEFYIADLT…YVILNYQREA (72 aa).

Belongs to the RimM family. Binds ribosomal protein uS19.

The protein localises to the cytoplasm. In terms of biological role, an accessory protein needed during the final step in the assembly of 30S ribosomal subunit, possibly for assembly of the head region. Essential for efficient processing of 16S rRNA. May be needed both before and after RbfA during the maturation of 16S rRNA. It has affinity for free ribosomal 30S subunits but not for 70S ribosomes. The polypeptide is Ribosome maturation factor RimM (Rickettsia rickettsii (strain Iowa)).